A 282-amino-acid chain; its full sequence is MNPISQFVREYLLAVQFFTRIPVVGRLADWVGYSPELLRASAGHFPGVGILVGVMAALVYGLIQALLPNTPFTPLVAAVLSTAATVLLTGGFHEDGLADVADGLGGSQDRERALEIMKDSRVGAFGAMALMLALLGKTALLAMLGSVDVSPAELGDDASFSSWYIGAALLTGHVVSRGLPLLLIWLLPHVGNTASSKSKPLADQISQGSLLVAFIWSFVVLALAGLALDAISLIVACSFSLLALLWMGALFKRRLQGFTGDCLGATQQVCEIAFYLGLAVSL.

Transmembrane regions (helical) follow at residues glycine 47–leucine 67, phenylalanine 72–phenylalanine 92, alanine 124–leucine 144, alanine 167–leucine 187, glycine 208–leucine 228, and isoleucine 231–phenylalanine 251.

This sequence belongs to the CobS family. It depends on Mg(2+) as a cofactor.

It is found in the cell inner membrane. The enzyme catalyses alpha-ribazole + adenosylcob(III)inamide-GDP = adenosylcob(III)alamin + GMP + H(+). The catalysed reaction is alpha-ribazole 5'-phosphate + adenosylcob(III)inamide-GDP = adenosylcob(III)alamin 5'-phosphate + GMP + H(+). It participates in cofactor biosynthesis; adenosylcobalamin biosynthesis; adenosylcobalamin from cob(II)yrinate a,c-diamide: step 7/7. Joins adenosylcobinamide-GDP and alpha-ribazole to generate adenosylcobalamin (Ado-cobalamin). Also synthesizes adenosylcobalamin 5'-phosphate from adenosylcobinamide-GDP and alpha-ribazole 5'-phosphate. This chain is Adenosylcobinamide-GDP ribazoletransferase, found in Polaromonas sp. (strain JS666 / ATCC BAA-500).